Consider the following 375-residue polypeptide: Deoxyhypusine synthase-like protein (375 aa).

It belongs to the deoxyhypusine synthase family.

The polypeptide is Deoxyhypusine synthase-like protein (Elusimicrobium minutum (strain Pei191)).